Consider the following 121-residue polypeptide: Spermidine export protein MdtJ (121 aa).

4 helical membrane passes run Met-1–Ser-21, Gly-32–Val-52, Ile-55–Phe-75, and Glu-82–Ile-102.

Belongs to the drug/metabolite transporter (DMT) superfamily. Small multidrug resistance (SMR) (TC 2.A.7.1) family. MdtJ subfamily. In terms of assembly, forms a complex with MdtI.

The protein localises to the cell inner membrane. Functionally, catalyzes the excretion of spermidine. The chain is Spermidine export protein MdtJ from Escherichia coli O139:H28 (strain E24377A / ETEC).